The following is a 122-amino-acid chain: MKKEQRIKKNREFSAVFKKGSSMANRQFVLYVLPKEGQDRLRLGLSVSKRVGNAVCRNRIKRLVRAAFHELEGQLRPDCDYVVIARNPARDLSFKEVRSSLEHVMKKAKVLAPLYGNRKKDS.

This sequence belongs to the RnpA family. In terms of assembly, consists of a catalytic RNA component (M1 or rnpB) and a protein subunit.

The enzyme catalyses Endonucleolytic cleavage of RNA, removing 5'-extranucleotides from tRNA precursor.. Functionally, RNaseP catalyzes the removal of the 5'-leader sequence from pre-tRNA to produce the mature 5'-terminus. It can also cleave other RNA substrates such as 4.5S RNA. The protein component plays an auxiliary but essential role in vivo by binding to the 5'-leader sequence and broadening the substrate specificity of the ribozyme. The polypeptide is Ribonuclease P protein component (Shouchella clausii (strain KSM-K16) (Alkalihalobacillus clausii)).